A 306-amino-acid polypeptide reads, in one-letter code: Probable pinoresinol-lariciresinol reductase 3 (306 aa).

NADP(+) contacts are provided by residues 14 to 20 (GATGRLG), arginine 39, and lysine 46. Lysine 131 serves as the catalytic Proton acceptor. Residue arginine 135 participates in NADP(+) binding.

Belongs to the NmrA-type oxidoreductase family. Isoflavone reductase subfamily. As to quaternary structure, dimer.

Its function is as follows. Probable reductase that might be involved in the reduction of lariciresinol into secoisolariciresinol. In most plant species, a single enzyme is able to reduce both pinoresinol and lariciresinol efficiently while in Arabidopsis, PRR1 and PRR2 show a strict substrate selectivity for pinoresinol. The protein is Probable pinoresinol-lariciresinol reductase 3 (PLR3) of Arabidopsis thaliana (Mouse-ear cress).